Here is a 225-residue protein sequence, read N- to C-terminus: NAD(P)H-quinone oxidoreductase subunit K, chloroplastic (225 aa).

[4Fe-4S] cluster-binding residues include Cys-43, Cys-44, Cys-108, and Cys-139.

The protein belongs to the complex I 20 kDa subunit family. As to quaternary structure, NDH is composed of at least 16 different subunits, 5 of which are encoded in the nucleus. Requires [4Fe-4S] cluster as cofactor.

The protein localises to the plastid. It is found in the chloroplast thylakoid membrane. The enzyme catalyses a plastoquinone + NADH + (n+1) H(+)(in) = a plastoquinol + NAD(+) + n H(+)(out). The catalysed reaction is a plastoquinone + NADPH + (n+1) H(+)(in) = a plastoquinol + NADP(+) + n H(+)(out). Its function is as follows. NDH shuttles electrons from NAD(P)H:plastoquinone, via FMN and iron-sulfur (Fe-S) centers, to quinones in the photosynthetic chain and possibly in a chloroplast respiratory chain. The immediate electron acceptor for the enzyme in this species is believed to be plastoquinone. Couples the redox reaction to proton translocation, and thus conserves the redox energy in a proton gradient. The protein is NAD(P)H-quinone oxidoreductase subunit K, chloroplastic of Lemna minor (Common duckweed).